The sequence spans 246 residues: Probable cytokinin riboside 5'-monophosphate phosphoribohydrolase LOGL5 (246 aa).

Basic and acidic residues predominate over residues 1 to 10 (MMMENSREQQ). The disordered stretch occupies residues 1–28 (MMMENSREQQPESSPANNNSKKKKKKKT). Substrate-binding positions include Glu103, 121-122 (RK), 138-144 (GYGTLEE), and Thr150.

It belongs to the LOG family. As to expression, expressed in roots and leaves.

It catalyses the reaction N(6)-(dimethylallyl)adenosine 5'-phosphate + H2O = N(6)-dimethylallyladenine + D-ribose 5-phosphate. It carries out the reaction 9-ribosyl-trans-zeatin 5'-phosphate + H2O = trans-zeatin + D-ribose 5-phosphate. Cytokinin-activating enzyme working in the direct activation pathway. Phosphoribohydrolase that converts inactive cytokinin nucleotides to the biologically active free-base forms. This chain is Probable cytokinin riboside 5'-monophosphate phosphoribohydrolase LOGL5 (LOGL5), found in Oryza sativa subsp. japonica (Rice).